The chain runs to 416 residues: Tiggy-winkle hedgehog protein (416 aa).

The first 26 residues, 1-26 (MDVRLHLKQFALLCFISLLLTPCGLA), serve as a signal peptide directing secretion. Residue C27 is the site of N-palmitoyl cysteine attachment. Positions 92, 93, 98, 128, 129, 132, and 134 each coordinate Ca(2+). Zn(2+)-binding residues include H143, D150, and H185. G200 is lipidated: Cholesterol glycine ester.

Belongs to the hedgehog family. Multimer. As to quaternary structure, interacts with HHATL/GUP1 which negatively regulates HHAT-mediated palmitoylation of the TWHH N-terminus. Interacts with BOC and CDON. Interacts with HHIP. Interacts with DISP1 via its cholesterol anchor. Interacts with SCUBE2. In terms of processing, the C-terminal domain displays an autoproteolysis activity and a cholesterol transferase activity. Both activities result in the cleavage of the full-length protein into two parts (N-product and C-product) followed by the covalent attachment of a cholesterol moiety to the C-terminal of the newly generated N-product. Cholesterylation is required for the tiggy-winkle hedgehog protein N-product targeting to lipid rafts and multimerization. N-product is the active species in both local and long-range signaling, whereas the C-product is degraded in the endoplasmic reticulum. Post-translationally, N-palmitoylation by HHAT of N-product is required for tiggy-winkle hedgehog protein N-product multimerization and full activity. It is a prerequisite for the membrane-proximal positioning and the subsequent shedding of this N-terminal peptide. The lipidated N- and C-terminal peptides of N-product can be cleaved (shedding). The N-terminal palmitoylated peptide is cleaved at the Cardin-Weintraub (CW) motif site. The cleavage reduced the interactions with heparan sulfate. The cleavage is enhanced by SCUBE2. As to expression, expressed in the ventral midline of the neural tube and brain. In the developing brain, expression occurs in domains that include a discrete region in the floor of the diencephalon. Not detected in the notochord or developing fin bud.

The protein resides in the cell membrane. It is found in the endoplasmic reticulum membrane. Its subcellular location is the golgi apparatus membrane. Its function is as follows. The C-terminal part of the tiggy-winkle hedgehog protein precursor displays an autoproteolysis and a cholesterol transferase activity. Both activities result in the cleavage of the full-length protein into two parts (N-product and C-product) followed by the covalent attachment of a cholesterol moiety to the C-terminal of the newly generated N-product. Both activities occur in the endoplasmic reticulum. Once cleaved, the C-product is degraded in the endoplasmic reticulum. Functionally, the dually lipidated tiggy-winkle hedgehog protein N-product is a morphogen which is essential for a variety of patterning events during development. Involved in dorso-ventral patterning of the brain and in early patterning of the developing eyes. Binds to the patched (PTCH1) receptor, which functions in association with smoothened (SMO), to activate the transcription of target genes. The polypeptide is Tiggy-winkle hedgehog protein (shhb) (Danio rerio (Zebrafish)).